The following is a 225-amino-acid chain: MAGHDSGNARRGRASFGAFVRKPVERDSVANAGQAAEQGSPEATQAWPDDAVEVGAVVDAYGLKGWVKVATHADAGRGGDALLNARRWWLERGAERLSVRIMQSKTRSDTVVAQPAGVSDRDAALSMRGFRVFVRREDFPALAADEFYWVDLIGLEVVNEQSVALGKVSGMIDNGVHSIMRVEYPATGKDGQPTTDERLIPFVGVYVKTVDQAARRIVVDWEADY.

In terms of domain architecture, PRC barrel spans 144–225 (ADEFYWVDLI…RIVVDWEADY (82 aa)).

It belongs to the RimM family. Binds ribosomal protein uS19.

It localises to the cytoplasm. An accessory protein needed during the final step in the assembly of 30S ribosomal subunit, possibly for assembly of the head region. Essential for efficient processing of 16S rRNA. May be needed both before and after RbfA during the maturation of 16S rRNA. It has affinity for free ribosomal 30S subunits but not for 70S ribosomes. This Burkholderia orbicola (strain AU 1054) protein is Ribosome maturation factor RimM.